A 324-amino-acid chain; its full sequence is Probable acrylyl-CoA reductase AcuI (324 aa).

NADP(+) contacts are provided by residues Tyr-41, 156–159 (SGGV), 178–180 (SGR), Arg-198, Leu-242, Ile-256, Ser-267, and Asn-313.

This sequence belongs to the zinc-containing alcohol dehydrogenase family. Acrylyl-CoA reductase subfamily. As to quaternary structure, homodimer.

Its subcellular location is the cytoplasm. The enzyme catalyses propanoyl-CoA + NADP(+) = acryloyl-CoA + NADPH + H(+). Probably catalyzes the NADPH-dependent reduction of acrylyl-CoA to propanoyl-CoA. The chain is Probable acrylyl-CoA reductase AcuI (acuI) from Escherichia coli (strain K12).